Reading from the N-terminus, the 290-residue chain is Ig delta chain C region membrane-bound form (290 aa).

The 101-residue stretch at 5–105 (PDMFLLSECK…WDSQSSKRVT (101 aa)) folds into the Ig-like 1 domain. An intrachain disulfide couples C26 to C78. N-linked (GlcNAc...) asparagine glycosylation is found at N58 and N75. Positions 89-111 (PFKFPESWDSQSSKRVTPTLQAK) are disordered. Positions 96-111 (WDSQSSKRVTPTLQAK) are enriched in polar residues. N112, N135, and N227 each carry an N-linked (GlcNAc...) asparagine glycan. Residues 133–233 (PSNLTVNILT…TKLNASKSLA (101 aa)) form the Ig-like 2 domain. A helical membrane pass occupies residues 262-279 (GLWPTMCTFVALFLLTLL). Topologically, residues 280–290 (YSGFVTFIKVK) are cytoplasmic.

Cell lines producing IgD contain several mRNA species for Ig delta chains. In plasmacytomas, the secreted form is the major component, and the membrane-bound form is a minor component. In spleen, however, the membrane-bound form is the major component. These two forms differ in their C-terminal segments.

The protein localises to the cell membrane. The chain is Ig delta chain C region membrane-bound form from Mus musculus (Mouse).